Consider the following 157-residue polypeptide: MMSISPIVSLRRCDNEPSMPDEWRLYKLASRLRTFSNWPFTEDCACTPERMAEAGFVHCPTDNSPDVVKCFFCLKELEGWQPEDDPMDEHKKHSPSCLFIALKKKAEELTLSEFLKLDLEHTKIKMQKQMNLHIERFQAKANEVRGHLEKLDADETQ.

Residues 31-101 form a BIR repeat; it reads RLRTFSNWPF…KHSPSCLFIA (71 aa). The residue at position 47 (threonine 47) is a Phosphothreonine; by CDK1. The Zn(2+) site is built by cysteine 70, cysteine 73, histidine 90, and cysteine 97.

This sequence belongs to the IAP family. In terms of assembly, component of the CPC at least composed of survivin/birc5, incenp, cdca8/borealin and/or cdca9/dasra-A, and aurkb/aurora-B. Interacts directly with incenp (via N-terminus). Interacts with rxra; the interaction is stronger in the absence of 9-cis retinoic acids. In terms of processing, ubiquitination is required for centrosome-targeting. Highly expressed in vascular endothelial cells of tadpoles.

The protein localises to the cytoplasm. The protein resides in the nucleus. Its subcellular location is the chromosome. It is found in the centromere. It localises to the cytoskeleton. The protein localises to the spindle. Component of the chromosomal passenger complex (CPC), a complex that acts as a key regulator of mitosis. The CPC complex has essential functions at the centromere in ensuring correct chromosome alignment and segregation and is required for chromatin-induced microtubule stabilization and spindle assembly. Does not appear to exhibit anti-apoptotic activity. Plays a role in increasing blood vessel size during development. This chain is Baculoviral IAP repeat-containing protein 5.2-A (birc5.2-a), found in Xenopus laevis (African clawed frog).